The primary structure comprises 279 residues: Virginiamycin B lyase (279 aa).

H215 provides a ligand contact to substrate. A Mg(2+)-binding site is contributed by E253. H255 acts as the Proton acceptor in catalysis. Position 270 (E270) interacts with Mg(2+).

This sequence belongs to the Vgb family. As to quaternary structure, monomer. It depends on Mg(2+) as a cofactor.

Inactivates the type B streptogramin antibiotics by linearizing the lactone ring at the ester linkage, generating a free phenylglycine carboxylate and converting the threonyl moiety into 2-amino-butenoic acid. The chain is Virginiamycin B lyase from Nocardia farcinica (strain IFM 10152).